A 265-amino-acid chain; its full sequence is Undecaprenyl-diphosphatase (265 aa).

7 helical membrane-spanning segments follow: residues 41 to 61, 75 to 95, 104 to 124, 137 to 157, 180 to 200, 215 to 235, and 244 to 264; these read IAYT…LIYF, LKFL…LYVI, YNPS…GIYI, LSTK…LPGV, YSYL…LLFT, GIAL…GFLL, and YLID…GLII.

Belongs to the UppP family.

The protein localises to the cell membrane. The enzyme catalyses di-trans,octa-cis-undecaprenyl diphosphate + H2O = di-trans,octa-cis-undecaprenyl phosphate + phosphate + H(+). Functionally, catalyzes the dephosphorylation of undecaprenyl diphosphate (UPP). The protein is Undecaprenyl-diphosphatase of Saccharolobus islandicus (strain Y.N.15.51 / Yellowstone #2) (Sulfolobus islandicus).